The primary structure comprises 64 residues: Conotoxin Im11.4 (64 aa).

An N-terminal signal peptide occupies residues 1 to 26; sequence MMFRLTSVSCILLVIAFLNLVGLTNA. 4 disulfides stabilise this stretch: Cys27–Cys41, Cys34–Cys46, Cys40–Cys50, and Cys45–Cys54. His57 is subject to Histidine amide. The propeptide occupies 61-64; sequence ATFQ.

Belongs to the conotoxin I2 superfamily. In terms of tissue distribution, expressed by the venom duct.

Its subcellular location is the secreted. In Conus imperialis (Imperial cone), this protein is Conotoxin Im11.4.